A 134-amino-acid chain; its full sequence is Thyrotropin subunit beta (134 aa).

A signal peptide spans Met1–Gly16. 6 disulfides stabilise this stretch: Cys22-Cys72, Cys36-Cys87, Cys39-Cys125, Cys47-Cys103, Cys51-Cys105, and Cys108-Cys115. Asn43 carries N-linked (GlcNAc...) asparagine glycosylation.

This sequence belongs to the glycoprotein hormones subunit beta family. As to quaternary structure, heterodimer of a common alpha chain and a unique beta chain which confers biological specificity to thyrotropin, lutropin, follitropin and gonadotropin.

Its subcellular location is the secreted. Functionally, indispensable for the control of thyroid structure and metabolism. The protein is Thyrotropin subunit beta (TSHB) of Gallus gallus (Chicken).